Reading from the N-terminus, the 473-residue chain is Fumarate hydratase class II (473 aa).

Substrate-binding positions include 104–106 (SGT), 128–131 (HPND), 138–140 (SSN), and threonine 186. Residue histidine 187 is the Proton donor/acceptor of the active site. Serine 318 is a catalytic residue. Residues serine 319 and 324 to 326 (KVN) contribute to the substrate site.

It belongs to the class-II fumarase/aspartase family. Fumarase subfamily. Homotetramer.

The protein localises to the cytoplasm. The enzyme catalyses (S)-malate = fumarate + H2O. Its pathway is carbohydrate metabolism; tricarboxylic acid cycle; (S)-malate from fumarate: step 1/1. In terms of biological role, involved in the TCA cycle. Catalyzes the stereospecific interconversion of fumarate to L-malate. The polypeptide is Fumarate hydratase class II (Corynebacterium glutamicum (strain ATCC 13032 / DSM 20300 / JCM 1318 / BCRC 11384 / CCUG 27702 / LMG 3730 / NBRC 12168 / NCIMB 10025 / NRRL B-2784 / 534)).